A 419-amino-acid chain; its full sequence is Cyclin-B2-2 (419 aa).

The disordered stretch occupies residues 79–116; it reads QPSSAPLAPIGSERQKRTADSAFHGPADMECTKITSDD.

This sequence belongs to the cyclin family. Cyclin AB subfamily. In terms of assembly, interacts with CDKB2-1. In terms of tissue distribution, expressed in the intercalary meristem and the elongation zone of internodes. Expressed in adventitious roots at all nodes under submergence conditions.

It localises to the nucleus. Functionally, involved in the control of the cell cycle at the G2/M (mitosis) transition. May associate to CDKB2-1 and activate CDKB2-1 kinase to promote cell division. This Oryza sativa subsp. indica (Rice) protein is Cyclin-B2-2 (CYCB2-2).